The chain runs to 498 residues: L-proline--[L-prolyl-carrier protein] ligase (498 aa).

The protein belongs to the ATP-dependent AMP-binding enzyme family.

It carries out the reaction holo-[peptidyl-carrier protein] + L-proline + ATP = L-prolyl-[peptidyl-carrier protein] + AMP + diphosphate. In terms of biological role, involved in the biosynthesis of pyoluteorin. Catalyzes the conversion of L-proline to L-prolyl-AMP and the transfer of the L-prolyl group to acyl carrier protein PltL. The polypeptide is L-proline--[L-prolyl-carrier protein] ligase (Pseudomonas fluorescens (strain ATCC BAA-477 / NRRL B-23932 / Pf-5)).